The following is a 111-amino-acid chain: MPANARSHAVLTTESKVTIRGQTTIPAPVREALKLKPGQDSIHYEILPGGQVFMCRLGDEQEDHTMNAFLRFLDADIQNNPQKTRPFNIQQGKKLVAGMDVNIDDEIGDDE.

Residues 12–59 enclose the SpoVT-AbrB domain; it reads TTESKVTIRGQTTIPAPVREALKLKPGQDSIHYEILPGGQVFMCRLGD.

Homodimer; forms a complex with YhaV with stoichiometry PrlF(2)-YhaV(4), possibly as a YhaV(2)-PrlF(2)-YhaV(2) complex like the MazFE complex. This complex is seen to dimerize in solution.

The protein localises to the cytoplasm. In terms of biological role, antitoxin component of a type II toxin-antitoxin (TA) system. Labile antitoxin that binds to the YhaV toxin and neutralizes its ribonuclease activity. Also acts as a transcription factor. The YhaV/PrlF complex binds the prlF-yhaV operon, probably negatively regulating its expression. Negatively regulates its own expression as well as relieving the export block imposed by high-level synthesis of the LamB-LacZ hybrid protein. Overexpression leads to increased doubling time and also suppresses a htrA (degP) null phenotype. This Escherichia coli (strain K12) protein is Antitoxin PrlF (prlF).